Reading from the N-terminus, the 383-residue chain is L-Ala-D/L-Glu epimerase (383 aa).

Residues Arg68, Tyr94, and Lys198–Lys200 contribute to the substrate site. Mg(2+) is bound by residues Asp224, Glu251, and Asp276. Residues Lys298, Cys326 to Thr328, and Asp348 to Asp350 each bind substrate.

This sequence belongs to the mandelate racemase/muconate lactonizing enzyme family. Mg(2+) is required as a cofactor.

It carries out the reaction L-alanyl-L-glutamate = L-alanyl-D-glutamate. Its function is as follows. Catalyzes the epimerization of L-Ala-D-Glu to L-Ala-L-Glu and may play a role in the metabolism of the murein peptide, of which L-Ala-D-Glu is a component. Is also able to catalyze the epimerization of L-Ala-D-Asp, L-Ala-L-Glu, L-Ala-L-Ser, L-Ala-L-Pro, L-Ala-L-L-Val, L-Ala-L-Thr, L-Ala-L-Leu, L-Ala-L-Ile and L-Gly-L-Glu (in vitro). The sequence is that of L-Ala-D/L-Glu epimerase from Bacteroides thetaiotaomicron (strain ATCC 29148 / DSM 2079 / JCM 5827 / CCUG 10774 / NCTC 10582 / VPI-5482 / E50).